The primary structure comprises 171 residues: MSHRNDSSRKHRKSRSIKNDQHYPTVSFDGAESVDIPADEGKSPVSTHLSLASNPTEFKFMDEIALLKRGRIDKDAPKHPYNRRGQQPMMKKEISVTSAHSNSSLPVRSPAIMTLMGGVPEAEKEYNVGKGGLLKISKMKEGGKRYEVSANERFTVFQQTAGQTCLFTFKA.

Disordered regions lie at residues 1 to 50 (MSHR…THLS) and 71 to 91 (RIDK…PMMK).

This is an uncharacterized protein from Caenorhabditis elegans.